Reading from the N-terminus, the 55-residue chain is ATP synthase F(0) complex subunit 8 (55 aa).

A helical transmembrane segment spans residues 4–24; that stretch reads LNPSPWLLILLFSWLIFLTML. The tract at residues 36 to 55 is disordered; it reads MPSTQNMCKQEPEPWTWPWA.

The protein belongs to the ATPase protein 8 family. As to quaternary structure, component of the ATP synthase complex composed at least of ATP5F1A/subunit alpha, ATP5F1B/subunit beta, ATP5MC1/subunit c (homooctomer), MT-ATP6/subunit a, MT-ATP8/subunit 8, ATP5ME/subunit e, ATP5MF/subunit f, ATP5MG/subunit g, ATP5MK/subunit k, ATP5MJ/subunit j, ATP5F1C/subunit gamma, ATP5F1D/subunit delta, ATP5F1E/subunit epsilon, ATP5PF/subunit F6, ATP5PB/subunit b, ATP5PD/subunit d, ATP5PO/subunit OSCP. ATP synthase complex consists of a soluble F(1) head domain (subunits alpha(3) and beta(3)) - the catalytic core - and a membrane F(0) domain - the membrane proton channel (subunits c, a, 8, e, f, g, k and j). These two domains are linked by a central stalk (subunits gamma, delta, and epsilon) rotating inside the F1 region and a stationary peripheral stalk (subunits F6, b, d, and OSCP).

It localises to the mitochondrion membrane. Subunit 8, of the mitochondrial membrane ATP synthase complex (F(1)F(0) ATP synthase or Complex V) that produces ATP from ADP in the presence of a proton gradient across the membrane which is generated by electron transport complexes of the respiratory chain. ATP synthase complex consist of a soluble F(1) head domain - the catalytic core - and a membrane F(1) domain - the membrane proton channel. These two domains are linked by a central stalk rotating inside the F(1) region and a stationary peripheral stalk. During catalysis, ATP synthesis in the catalytic domain of F(1) is coupled via a rotary mechanism of the central stalk subunits to proton translocation. In vivo, can only synthesize ATP although its ATP hydrolase activity can be activated artificially in vitro. Part of the complex F(0) domain. This is ATP synthase F(0) complex subunit 8 from Latimeria chalumnae (Coelacanth).